A 447-amino-acid polypeptide reads, in one-letter code: N-succinylarginine dihydrolase (447 aa).

Substrate contacts are provided by residues 19–28 (AGLSFGNEAS), Asn-110, and 137–138 (HR). Glu-174 is a catalytic residue. Substrate is bound at residue Arg-213. Residue His-249 is part of the active site. Substrate contacts are provided by Asp-251 and Asn-364. Residue Cys-370 is the Nucleophile of the active site.

The protein belongs to the succinylarginine dihydrolase family. As to quaternary structure, homodimer.

The enzyme catalyses N(2)-succinyl-L-arginine + 2 H2O + 2 H(+) = N(2)-succinyl-L-ornithine + 2 NH4(+) + CO2. It functions in the pathway amino-acid degradation; L-arginine degradation via AST pathway; L-glutamate and succinate from L-arginine: step 2/5. Its function is as follows. Catalyzes the hydrolysis of N(2)-succinylarginine into N(2)-succinylornithine, ammonia and CO(2). The chain is N-succinylarginine dihydrolase from Yersinia pestis bv. Antiqua (strain Antiqua).